We begin with the raw amino-acid sequence, 163 residues long: Ureidoglycolate lyase (163 aa).

It belongs to the ureidoglycolate lyase family. As to quaternary structure, homodimer. Ni(2+) is required as a cofactor.

The catalysed reaction is (S)-ureidoglycolate = urea + glyoxylate. The protein operates within nitrogen metabolism; (S)-allantoin degradation. Its function is as follows. Catalyzes the catabolism of the allantoin degradation intermediate (S)-ureidoglycolate, generating urea and glyoxylate. Involved in the utilization of allantoin as nitrogen source. This is Ureidoglycolate lyase from Mesorhizobium japonicum (strain LMG 29417 / CECT 9101 / MAFF 303099) (Mesorhizobium loti (strain MAFF 303099)).